A 530-amino-acid polypeptide reads, in one-letter code: Bifunctional purine biosynthesis protein PurH (530 aa).

In terms of domain architecture, MGS-like spans M1 to T147.

It belongs to the PurH family.

It carries out the reaction (6R)-10-formyltetrahydrofolate + 5-amino-1-(5-phospho-beta-D-ribosyl)imidazole-4-carboxamide = 5-formamido-1-(5-phospho-D-ribosyl)imidazole-4-carboxamide + (6S)-5,6,7,8-tetrahydrofolate. It catalyses the reaction IMP + H2O = 5-formamido-1-(5-phospho-D-ribosyl)imidazole-4-carboxamide. The protein operates within purine metabolism; IMP biosynthesis via de novo pathway; 5-formamido-1-(5-phospho-D-ribosyl)imidazole-4-carboxamide from 5-amino-1-(5-phospho-D-ribosyl)imidazole-4-carboxamide (10-formyl THF route): step 1/1. Its pathway is purine metabolism; IMP biosynthesis via de novo pathway; IMP from 5-formamido-1-(5-phospho-D-ribosyl)imidazole-4-carboxamide: step 1/1. The protein is Bifunctional purine biosynthesis protein PurH of Neisseria meningitidis serogroup A / serotype 4A (strain DSM 15465 / Z2491).